A 109-amino-acid chain; its full sequence is Nucleoid-associated protein Ldb1634 (109 aa).

The disordered stretch occupies residues 18 to 40 (MMKQAKKLQEQMAQEQENITTQE).

This sequence belongs to the YbaB/EbfC family. In terms of assembly, homodimer.

Its subcellular location is the cytoplasm. The protein localises to the nucleoid. Functionally, binds to DNA and alters its conformation. May be involved in regulation of gene expression, nucleoid organization and DNA protection. This Lactobacillus delbrueckii subsp. bulgaricus (strain ATCC 11842 / DSM 20081 / BCRC 10696 / JCM 1002 / NBRC 13953 / NCIMB 11778 / NCTC 12712 / WDCM 00102 / Lb 14) protein is Nucleoid-associated protein Ldb1634.